We begin with the raw amino-acid sequence, 343 residues long: Peptide methionine sulfoxide reductase msrA/msrB (343 aa).

Residues 21–174 (KVIYLAGGCF…PNGYCHIDLK (154 aa)) form a peptide methionine sulfoxide reductase A region. Cys29 (cysteine sulfenic acid (-SOH) intermediate) is an active-site residue. The MsrB domain occupies 191–314 (DEVLKKKLTQ…NSASLRFIPL (124 aa)). Cys303 (nucleophile) is an active-site residue.

The protein in the N-terminal section; belongs to the MsrA Met sulfoxide reductase family. This sequence in the C-terminal section; belongs to the MsrB Met sulfoxide reductase family.

It catalyses the reaction L-methionyl-[protein] + [thioredoxin]-disulfide + H2O = L-methionyl-(S)-S-oxide-[protein] + [thioredoxin]-dithiol. It carries out the reaction [thioredoxin]-disulfide + L-methionine + H2O = L-methionine (S)-S-oxide + [thioredoxin]-dithiol. The catalysed reaction is L-methionyl-[protein] + [thioredoxin]-disulfide + H2O = L-methionyl-(R)-S-oxide-[protein] + [thioredoxin]-dithiol. Functionally, has an important function as a repair enzyme for proteins that have been inactivated by oxidation. Catalyzes the reversible oxidation-reduction of methionine sulfoxide in proteins to methionine. In Enterococcus faecalis (Streptococcus faecalis), this protein is Peptide methionine sulfoxide reductase msrA/msrB.